We begin with the raw amino-acid sequence, 78 residues long: MSQPDPVKKKRPPVKEEDLKGARGNLSKNQEIKSKTYQVMKQCEQMGSAAPSIFSRARTGSETVFEKSKDEPPKSVFG.

Disordered stretches follow at residues 1 to 33 (MSQP…QEIK) and 45 to 78 (QMGS…SVFG). Positions 6-14 (PVKKKRPPV) match the Nuclear localization signal motif. The span at 64–78 (VFEKSKDEPPKSVFG) shows a compositional bias: basic and acidic residues.

It belongs to the MUSTN1 family. Predominantly expressed in heart and skeletal muscle. Detected in skeletal muscle satellite cells where expression increases with cell proliferation.

The protein localises to the nucleus. In terms of biological role, promotes the differentiation and proliferation of skeletal muscle satellite cells. The polypeptide is Musculoskeletal embryonic nuclear protein 1 (MUSTN1) (Gallus gallus (Chicken)).